Consider the following 500-residue polypeptide: Cytochrome P450 CYP736A12 (500 aa).

A helical transmembrane segment spans residues 4-24 (LAYPLLFVLLGALSWWILPII). C442 contacts heme.

It belongs to the cytochrome P450 family. Heme serves as cofactor.

It is found in the membrane. Probable heme-thiolate monooxygenase. The chain is Cytochrome P450 CYP736A12 from Panax ginseng (Korean ginseng).